The sequence spans 319 residues: Ribonuclease Z (319 aa).

7 residues coordinate Zn(2+): H62, H64, D66, H67, H145, D215, and H273. Catalysis depends on D66, which acts as the Proton acceptor.

It belongs to the RNase Z family. As to quaternary structure, homodimer. Zn(2+) serves as cofactor.

It carries out the reaction Endonucleolytic cleavage of RNA, removing extra 3' nucleotides from tRNA precursor, generating 3' termini of tRNAs. A 3'-hydroxy group is left at the tRNA terminus and a 5'-phosphoryl group is left at the trailer molecule.. Functionally, zinc phosphodiesterase, which displays some tRNA 3'-processing endonuclease activity. Probably involved in tRNA maturation, by removing a 3'-trailer from precursor tRNA. This Borrelia recurrentis (strain A1) protein is Ribonuclease Z.